The sequence spans 141 residues: Hemoglobin subunit alpha (141 aa).

One can recognise a Globin domain in the interval 1–141 (VLSAKDKTNI…VSTVLTSKYR (141 aa)). A Phosphoserine modification is found at serine 3. Lysine 7 carries the post-translational modification N6-succinyllysine. Threonine 8 carries the post-translational modification Phosphothreonine. Position 16 is an N6-acetyllysine; alternate (lysine 16). Residue lysine 16 is modified to N6-succinyllysine; alternate. Tyrosine 24 is subject to Phosphotyrosine. At lysine 40 the chain carries N6-succinyllysine. Serine 49 is subject to Phosphoserine. Histidine 58 provides a ligand contact to O2. Histidine 87 lines the heme b pocket. Phosphoserine is present on serine 102. Residue threonine 108 is modified to Phosphothreonine. 2 positions are modified to phosphoserine: serine 124 and serine 131. Threonine 134 and threonine 137 each carry phosphothreonine. Serine 138 carries the post-translational modification Phosphoserine.

Belongs to the globin family. In terms of assembly, heterotetramer of two alpha chains and two beta chains. As to expression, red blood cells.

Functionally, involved in oxygen transport from the lung to the various peripheral tissues. Its function is as follows. Hemopressin acts as an antagonist peptide of the cannabinoid receptor CNR1. Hemopressin-binding efficiently blocks cannabinoid receptor CNR1 and subsequent signaling. The protein is Hemoglobin subunit alpha (HBA) of Mesocricetus auratus (Golden hamster).